Reading from the N-terminus, the 772-residue chain is Magnetosome formation protease MamE (772 aa).

Over 1-21 (MTMFNGDVEDGGRSNVSCGKD) the chain is Cytoplasmic. Residues 22–42 (LKRYLMLMGVVALVVLFGAFI) traverse the membrane as a helical segment. Residues 43-772 (YRQSSGGLRL…RNGQEFWIVL (730 aa)) are Lumenal-facing. Residues His-187, Asp-220, and Ser-296 each act as charge relay system in the active site. An MCR (magnetochrome) 1 motif is present at residues 374 to 397 (IAAGTPSPHVDGRQNMDCSNCHDI). Cys-391, Cys-394, His-395, Cys-437, Cys-440, His-441, Cys-488, Cys-491, and His-492 together coordinate heme. Short sequence motifs (MCR) lie at residues 420-443 (IPAN…CHQF) and 470-494 (AIRA…CHQI). Residues 445–558 (GGAAAGPIAF…ALTPLTQRLG (114 aa)) enclose the Cytochrome c domain. PDZ domains follow at residues 522–626 (AINI…LRAG) and 696–765 (GATP…HRNG).

This sequence in the N-terminal section; belongs to the peptidase S1C family. In terms of assembly, might interact with MamB via PDZ1. The cofactor is heme. The protein isolated from magnetosome membranes has a molecular weight of about 36.3 kDa, probably due to C-terminal cleavage. Subject to autocatalytic cleavage; cleavage also requires MamO; these may be the same event.

It is found in the magnetosome membrane. In terms of biological role, acts at 2 distinct steps of magnetosome formation; required for correct localization of proteins to the magnetosome while the protease activity is required for maturation of small magnetite crystals into larger, functional ones. Probably cleaves at least itself, MamO and MamP; cleavage requires the putative transprot domain of MamO. Involved in localization of some proteins (at least MamA, MamC, MamF, MamI and MamJ) to the magnetosome. One of 7 genes (mamLQBIEMO) able to induce magnetosome membrane biogenesis; coexpression of mamLQRBIEMO in a deletion of the 17 gene mamAB operon restores magnetosome vesicle formation but not magnetite biosynthesis. This is Magnetosome formation protease MamE from Magnetospirillum gryphiswaldense (strain DSM 6361 / JCM 21280 / NBRC 15271 / MSR-1).